Reading from the N-terminus, the 451-residue chain is tRNA modification GTPase MnmE (451 aa).

(6S)-5-formyl-5,6,7,8-tetrahydrofolate-binding residues include Arg-28, Glu-85, and Lys-124. The TrmE-type G domain maps to 220 to 373; the sequence is GLYTVLVGPP…LKTRLRTLLL (154 aa). Asn-230 provides a ligand contact to K(+). GTP is bound by residues 230–235, 249–255, and 274–277; these read NVGKSS, TDVPGTT, and DTAG. Ser-234 lines the Mg(2+) pocket. K(+) is bound by residues Thr-249, Val-251, and Thr-254. Thr-255 lines the Mg(2+) pocket. Lys-451 is a (6S)-5-formyl-5,6,7,8-tetrahydrofolate binding site.

It belongs to the TRAFAC class TrmE-Era-EngA-EngB-Septin-like GTPase superfamily. TrmE GTPase family. In terms of assembly, homodimer. Heterotetramer of two MnmE and two MnmG subunits. It depends on K(+) as a cofactor.

Its subcellular location is the cytoplasm. Its function is as follows. Exhibits a very high intrinsic GTPase hydrolysis rate. Involved in the addition of a carboxymethylaminomethyl (cmnm) group at the wobble position (U34) of certain tRNAs, forming tRNA-cmnm(5)s(2)U34. The sequence is that of tRNA modification GTPase MnmE from Xylella fastidiosa (strain 9a5c).